Here is a 301-residue protein sequence, read N- to C-terminus: Acetylglutamate kinase (301 aa).

Substrate-binding positions include 68–69 (GG), Arg90, and Asn195.

Belongs to the acetylglutamate kinase family. ArgB subfamily.

Its subcellular location is the cytoplasm. It catalyses the reaction N-acetyl-L-glutamate + ATP = N-acetyl-L-glutamyl 5-phosphate + ADP. It functions in the pathway amino-acid biosynthesis; L-arginine biosynthesis; N(2)-acetyl-L-ornithine from L-glutamate: step 2/4. In terms of biological role, catalyzes the ATP-dependent phosphorylation of N-acetyl-L-glutamate. This chain is Acetylglutamate kinase, found in Pseudomonas fluorescens (strain ATCC BAA-477 / NRRL B-23932 / Pf-5).